Here is a 196-residue protein sequence, read N- to C-terminus: Probable histone chaperone ASF1A (196 aa).

A compositionally biased stretch (basic and acidic residues) spans 146–157 (VTKFPIDFHPEE). A disordered region spans residues 146–196 (VTKFPIDFHPEEEQTAATAAPPEQSDEQQPNVNGEAQVLPDQSVEPKPEES).

Belongs to the ASF1 family. As to quaternary structure, interacts with histone H3 and histone H4. Component of the HIRA complex made of UBN1, UBN2, ASF1A, CABIN1 and HIRA. Interacts with HIRA. Expressed in leaves and flower buds.

It is found in the nucleus. It localises to the nucleolus. In terms of biological role, histone chaperone that facilitates histone deposition and histone exchange and removal during nucleosome assembly and disassembly. While encoded by a region of the Arabidopsis thaliana genome that is homologous to the Brassica S-locus for self incompatibility, this protein may not play the same role in Arabidopsis thaliana. This chain is Probable histone chaperone ASF1A (ASF1A), found in Arabidopsis thaliana (Mouse-ear cress).